A 157-amino-acid polypeptide reads, in one-letter code: Small ribosomal subunit protein uS7 (157 aa).

It belongs to the universal ribosomal protein uS7 family. As to quaternary structure, part of the 30S ribosomal subunit. Contacts proteins S9 and S11.

Functionally, one of the primary rRNA binding proteins, it binds directly to 16S rRNA where it nucleates assembly of the head domain of the 30S subunit. Is located at the subunit interface close to the decoding center, probably blocks exit of the E-site tRNA. In Akkermansia muciniphila (strain ATCC BAA-835 / DSM 22959 / JCM 33894 / BCRC 81048 / CCUG 64013 / CIP 107961 / Muc), this protein is Small ribosomal subunit protein uS7.